The following is a 236-amino-acid chain: uncharacterized protein (236 aa).

A signal peptide spans 1–29 (MKGGDKMKKLILLMLLLPISLIGCTDEES).

This is an uncharacterized protein from Archaeoglobus fulgidus (strain ATCC 49558 / DSM 4304 / JCM 9628 / NBRC 100126 / VC-16).